The following is a 233-amino-acid chain: Pre-mRNA-splicing factor syf-2 (233 aa).

Residues M1–S16 show a composition bias toward polar residues. 2 disordered regions span residues M1 to G80 and V95 to M119. The segment covering K17–G80 has biased composition (basic and acidic residues). A coiled-coil region spans residues M18–E77.

Belongs to the SYF2 family. In terms of assembly, may be part of a spliceosome complex.

The protein resides in the nucleus. Functionally, may be involved in pre-mRNA splicing. The polypeptide is Pre-mRNA-splicing factor syf-2 (Caenorhabditis briggsae).